We begin with the raw amino-acid sequence, 31 residues long: Cytochrome b6-f complex subunit 6 (31 aa).

Residues 4–24 traverse the membrane as a helical segment; the sequence is ITSYFGFLLAALTITSVLFIG.

It belongs to the PetL family. The 4 large subunits of the cytochrome b6-f complex are cytochrome b6, subunit IV (17 kDa polypeptide, PetD), cytochrome f and the Rieske protein, while the 4 small subunits are PetG, PetL, PetM and PetN. The complex functions as a dimer.

The protein localises to the plastid. Its subcellular location is the chloroplast thylakoid membrane. In terms of biological role, component of the cytochrome b6-f complex, which mediates electron transfer between photosystem II (PSII) and photosystem I (PSI), cyclic electron flow around PSI, and state transitions. PetL is important for photoautotrophic growth as well as for electron transfer efficiency and stability of the cytochrome b6-f complex. The chain is Cytochrome b6-f complex subunit 6 from Lepidium virginicum (Virginia pepperweed).